The following is a 155-amino-acid chain: 2-C-methyl-D-erythritol 2,4-cyclodiphosphate synthase (155 aa).

A divalent metal cation-binding residues include D8 and H10. Residues 8–10 (DVH) and 34–35 (HS) each bind 4-CDP-2-C-methyl-D-erythritol 2-phosphate. Residue H42 coordinates a divalent metal cation. Residues 56–58 (DIG), 61–65 (FPDSD), 100–106 (AQKPKML), 132–135 (TTEE), F139, and K142 each bind 4-CDP-2-C-methyl-D-erythritol 2-phosphate.

Belongs to the IspF family. Homotrimer. It depends on a divalent metal cation as a cofactor.

It carries out the reaction 4-CDP-2-C-methyl-D-erythritol 2-phosphate = 2-C-methyl-D-erythritol 2,4-cyclic diphosphate + CMP. Its pathway is isoprenoid biosynthesis; isopentenyl diphosphate biosynthesis via DXP pathway; isopentenyl diphosphate from 1-deoxy-D-xylulose 5-phosphate: step 4/6. Involved in the biosynthesis of isopentenyl diphosphate (IPP) and dimethylallyl diphosphate (DMAPP), two major building blocks of isoprenoid compounds. Catalyzes the conversion of 4-diphosphocytidyl-2-C-methyl-D-erythritol 2-phosphate (CDP-ME2P) to 2-C-methyl-D-erythritol 2,4-cyclodiphosphate (ME-CPP) with a corresponding release of cytidine 5-monophosphate (CMP). The polypeptide is 2-C-methyl-D-erythritol 2,4-cyclodiphosphate synthase (Clostridium botulinum (strain Kyoto / Type A2)).